Reading from the N-terminus, the 342-residue chain is Platelet-activating factor receptor (342 aa).

The Extracellular segment spans residues 1–16; the sequence is MEPNNSFRVDSEFRYT. Asn-4 is a glycosylation site (N-linked (GlcNAc...) asparagine). The chain crosses the membrane as a helical span at residues 17 to 38; that stretch reads LFPIFYSIVFVLGVIANSYVLW. The Cytoplasmic segment spans residues 39 to 54; that stretch reads VFARLYPSKKFNEIKI. Residues 55–74 form a helical membrane-spanning segment; sequence FMVNLTMADLLFLVTLPLWI. The Extracellular segment spans residues 75–91; that stretch reads VYYYNQGDWILPKFLCN. Cys-90 and Cys-173 are joined by a disulfide. The chain crosses the membrane as a helical span at residues 92-113; the sequence is LAGCFFFINTYCSVAFLAVITY. The Cytoplasmic portion of the chain corresponds to 114–133; that stretch reads NRFQAVTRPIKTAQATTRKR. The chain crosses the membrane as a helical span at residues 134–155; that stretch reads GFLLSLIIWVSIVGAASYFFVL. The Extracellular segment spans residues 156 to 184; sequence DSTNSEPKKTGSGNITRCFEHYEKGSIPV. N-linked (GlcNAc...) asparagine glycosylation occurs at Asn-169. A helical transmembrane segment spans residues 185-205; the sequence is LIIHIFLVFSFFLVFLIILFC. Residues 206–233 are Cytoplasmic-facing; sequence NLVIIRTLLTQQVQMQRNAEVKRRALWM. A helical transmembrane segment spans residues 234 to 254; sequence VCTVLAVFVICFVPHHLVQLP. At 255–276 the chain is on the extracellular side; the sequence is WTLAELGFQDTDFHQGINDAHQ. A helical transmembrane segment spans residues 277–296; the sequence is VTLCLLSTNCVLDPIIYCFL. Residues 297 to 342 lie on the Cytoplasmic side of the membrane; the sequence is TKKFRKHLTEKLYSMRESRKCSRATSETGTEVVVQLKDAPIKSLKY.

The protein belongs to the G-protein coupled receptor 1 family. Interacts with ARRB1.

It is found in the cell membrane. Its function is as follows. Receptor for platelet activating factor, a chemotactic phospholipid mediator that possesses potent inflammatory, smooth-muscle contractile and hypotensive activity. Seems to mediate its action via a G protein that activates a phosphatidylinositol-calcium second messenger system. This is Platelet-activating factor receptor from Capra hircus (Goat).